The following is a 160-amino-acid chain: UPF0479 membrane protein YLL066W-A (160 aa).

Transmembrane regions (helical) follow at residues 39-59 (IVFC…KVLQ) and 136-156 (VPMI…ISQH).

This sequence belongs to the UPF0479 family.

It localises to the membrane. The protein is UPF0479 membrane protein YLL066W-A of Saccharomyces cerevisiae (strain ATCC 204508 / S288c) (Baker's yeast).